The chain runs to 342 residues: Glycerol-3-phosphate dehydrogenase [NAD(P)+] (342 aa).

Trp-11, Arg-33, and Lys-112 together coordinate NADPH. Lys-112, Gly-147, and Ser-149 together coordinate sn-glycerol 3-phosphate. Ala-151 contributes to the NADPH binding site. The sn-glycerol 3-phosphate site is built by Lys-202, Asp-255, Ser-265, Arg-266, and Asn-267. Lys-202 acts as the Proton acceptor in catalysis. Arg-266 contacts NADPH. 2 residues coordinate NADPH: Val-290 and Glu-292.

Belongs to the NAD-dependent glycerol-3-phosphate dehydrogenase family.

Its subcellular location is the cytoplasm. The enzyme catalyses sn-glycerol 3-phosphate + NAD(+) = dihydroxyacetone phosphate + NADH + H(+). The catalysed reaction is sn-glycerol 3-phosphate + NADP(+) = dihydroxyacetone phosphate + NADPH + H(+). The protein operates within membrane lipid metabolism; glycerophospholipid metabolism. Functionally, catalyzes the reduction of the glycolytic intermediate dihydroxyacetone phosphate (DHAP) to sn-glycerol 3-phosphate (G3P), the key precursor for phospholipid synthesis. The sequence is that of Glycerol-3-phosphate dehydrogenase [NAD(P)+] from Cupriavidus metallidurans (strain ATCC 43123 / DSM 2839 / NBRC 102507 / CH34) (Ralstonia metallidurans).